A 128-amino-acid polypeptide reads, in one-letter code: Large ribosomal subunit protein uL22 (128 aa).

Belongs to the universal ribosomal protein uL22 family. Part of the 50S ribosomal subunit.

Functionally, this protein binds specifically to 23S rRNA; its binding is stimulated by other ribosomal proteins, e.g. L4, L17, and L20. It is important during the early stages of 50S assembly. It makes multiple contacts with different domains of the 23S rRNA in the assembled 50S subunit and ribosome. In terms of biological role, the globular domain of the protein is located near the polypeptide exit tunnel on the outside of the subunit, while an extended beta-hairpin is found that lines the wall of the exit tunnel in the center of the 70S ribosome. This is Large ribosomal subunit protein uL22 from Prochlorococcus marinus (strain MIT 9301).